We begin with the raw amino-acid sequence, 617 residues long: Sodium-dependent noradrenaline transporter (617 aa).

The tract at residues 1 to 23 is disordered; the sequence is MLLARMNPQVQPENNGADTGPEQ. Residues 1–62 are Cytoplasmic-facing; the sequence is MLLARMNPQV…AQPRETWGKK (62 aa). Positions 8–17 are enriched in polar residues; it reads PQVQPENNGA. Residues 63–88 traverse the membrane as a helical segment; that stretch reads IDFLLSVVGFAVDLANVWRFPYLCYK. Na(+) contacts are provided by Gly71, Ala73, and Val74. A (R)-noradrenaline-binding site is contributed by Asp75. A dopamine-binding site is contributed by Asp75. Asn78 contributes to the Na(+) binding site. (R)-noradrenaline is bound by residues Tyr87 and Lys88. Residues 89-92 lie on the Extracellular side of the membrane; that stretch reads NGGG. Residues 93–116 traverse the membrane as a helical segment; that stretch reads AFLIPYTLFLIIAGMPLFYMELAL. Topologically, residues 117–135 are cytoplasmic; sequence GQYNREGAATVWKICPFFK. Residues 136 to 166 form a helical membrane-spanning segment; sequence GVGYAVILIALYVGFYYNVIIAWSLYYLFSS. Positions 145 and 149 each coordinate (R)-noradrenaline. Position 145 (Ala145) interacts with dopamine. At 167–233 the chain is on the extracellular side; that stretch reads FTLNLPWTDC…SSGIHDIGLP (67 aa). A disulfide bond links Cys176 and Cys185. 3 N-linked (GlcNAc...) asparagine glycosylation sites follow: Asn184, Asn192, and Asn198. Residues 234 to 254 form a helical membrane-spanning segment; the sequence is QWQLLLCLMVVVIVLYFSLWK. At 255–257 the chain is on the cytoplasmic side; the sequence is GVK. Residues 258 to 282 traverse the membrane as a helical segment; that stretch reads TSGKVVWITATLPYFVLFVLLVHGV. Residues 283–306 are Extracellular-facing; sequence TLPGASNGINAYLHIDFYRLKEAT. The helical transmembrane segment at 307–332 threads the bilayer; sequence VWIDAATQIFFSLGAGFGVLIAFASY. Residue Phe317 coordinates (R)-noradrenaline. Residue Phe317 coordinates dopamine. Ser318 contributes to the Na(+) binding site. Residues 333–338 are Cytoplasmic-facing; sequence NKFDNN. The helical transmembrane segment at 339–362 threads the bilayer; that stretch reads CYRDALLTSSINCITSFVSGFAIF. Residue Asn350 coordinates Na(+). The Extracellular segment spans residues 363-402; the sequence is SILGYMAHEHKVNIEDVATEGAGLVFILYPEAISTLSGST. Glu382 is a (R)-noradrenaline binding site. A dopamine-binding site is contributed by Glu382. Residues 403 to 428 traverse the membrane as a helical segment; it reads FWAVVFFVMLLALGLDSSMGGMEAVI. Na(+) is bound by residues Asp418 and Ser419. Topologically, residues 429–443 are cytoplasmic; that stretch reads TGLADDFQVLKRHRK. Residues 444 to 464 form a helical membrane-spanning segment; the sequence is LFTFGVTFSTFLLALFCITKG. Position 465 (Gly465) is a topological domain, extracellular. Residues 466 to 492 traverse the membrane as a helical segment; the sequence is IYVLTLLDTFAAGTSILFAVLMEAIGV. The Cytoplasmic segment spans residues 493–522; sequence SWFYGVDRFSNDIQQMMGFRPGLYWRLCWK. The helical transmembrane segment at 523 to 545 threads the bilayer; the sequence is FVSPAFLLFVVVVSIINFKPLTY. At 546-548 the chain is on the extracellular side; that stretch reads DDY. Residues 549-569 traverse the membrane as a helical segment; that stretch reads IFPPWANWVGWGIALSSMVLV. Topologically, residues 570–617 are cytoplasmic; sequence PIYVIYKFLSTQGSLWERLAYGITPENEHHLVAQRDIRQFQLQHWLAI.

This sequence belongs to the sodium:neurotransmitter symporter (SNF) (TC 2.A.22) family. SLC6A2 subfamily. As to quaternary structure, monomer. Can form homodimers in the cell membrane; homodimerization is mostly mediated by cholesterol and lipids, and regulates neurotransmitter transport activity. Interacts with PRKCABP. Post-translationally, palmitoylated; palmitoylation regulates protein levels and neurotransmitter transport.

The protein localises to the cell membrane. Its subcellular location is the cell projection. It localises to the axon. It is found in the synapse. The protein resides in the synaptosome. The enzyme catalyses (R)-noradrenaline(out) + chloride(out) + Na(+)(out) = (R)-noradrenaline(in) + chloride(in) + Na(+)(in). It carries out the reaction dopamine(out) + chloride(out) + Na(+)(out) = dopamine(in) + chloride(in) + Na(+)(in). It catalyses the reaction dopamine(out) + chloride(out) + 2 Na(+)(out) = dopamine(in) + chloride(in) + 2 Na(+)(in). Inhibited by mazindol, desipramine, nomifensine and nortriptyline. Mediates sodium- and chloride-dependent transport of norepinephrine (also known as noradrenaline), the primary signaling neurotransmitter in the autonomic sympathetic nervous system. Is responsible for norepinephrine re-uptake and clearance from the synaptic cleft, thus playing a crucial role in norepinephrine inactivation and homeostasis. Can also mediate sodium- and chloride-dependent transport of dopamine. In Homo sapiens (Human), this protein is Sodium-dependent noradrenaline transporter.